The sequence spans 488 residues: 3-octaprenyl-4-hydroxybenzoate carboxy-lyase (488 aa).

Position 172 (Asn172) interacts with Mn(2+). Prenylated FMN contacts are provided by residues 175-177 (IYR), 189-191 (RWL), and 194-195 (RG). Residue Glu238 participates in Mn(2+) binding. Asp287 (proton donor) is an active-site residue.

The protein belongs to the UbiD family. Homohexamer. Requires prenylated FMN as cofactor. It depends on Mn(2+) as a cofactor.

The protein resides in the cell membrane. It catalyses the reaction a 4-hydroxy-3-(all-trans-polyprenyl)benzoate + H(+) = a 2-(all-trans-polyprenyl)phenol + CO2. It functions in the pathway cofactor biosynthesis; ubiquinone biosynthesis. Its function is as follows. Catalyzes the decarboxylation of 3-octaprenyl-4-hydroxy benzoate to 2-octaprenylphenol, an intermediate step in ubiquinone biosynthesis. This chain is 3-octaprenyl-4-hydroxybenzoate carboxy-lyase, found in Pseudomonas syringae pv. syringae (strain B728a).